Consider the following 274-residue polypeptide: Merozoite surface protein 2 (274 aa).

The N-terminal stretch at methionine 1–isoleucine 20 is a signal peptide. 2 N-linked (GlcNAc...) asparagine glycosylation sites follow: asparagine 22 and asparagine 36. The tract at residues methionine 43–glycine 234 is disordered. Positions alanine 44–serine 200 are polymorphic region. Repeat copies occupy residues glycine 53–alanine 62 and glycine 63–aspartate 72. The 2 X 10 AA tandem repeats of G-A-S-G-S-A-G-S-G-[AD] stretch occupies residues glycine 53–aspartate 72. Residues glycine 53 to aspartate 72 are compositionally biased toward gly residues. The span at serine 91–serine 121 shows a compositional bias: low complexity. Polar residues-rich tracts occupy residues glutamate 122–threonine 131, glutamine 140–proline 167, and lysine 174–proline 202. Residue asparagine 151 is glycosylated (N-linked (GlcNAc...) asparagine). Asparagine 223 carries N-linked (GlcNAc...) asparagine glycosylation. Cysteines 231 and 239 form a disulfide. Asparagine 248 is a glycosylation site (N-linked (GlcNAc...) asparagine). Residue asparagine 248 is the site of GPI-anchor amidated asparagine attachment. Positions serine 249–isoleucine 274 are cleaved as a propeptide — removed in mature form.

The protein resides in the cell membrane. In terms of biological role, may play a role in the merozoite attachment to the erythrocyte. The chain is Merozoite surface protein 2 from Plasmodium falciparum (isolate kf1916).